The following is an 82-amino-acid chain: Small ribosomal subunit protein bS16 (82 aa).

Belongs to the bacterial ribosomal protein bS16 family.

The polypeptide is Small ribosomal subunit protein bS16 (Vibrio vulnificus (strain CMCP6)).